Consider the following 309-residue polypeptide: Ribosomal RNA large subunit methyltransferase F (309 aa).

Belongs to the methyltransferase superfamily. METTL16/RlmF family.

It is found in the cytoplasm. It carries out the reaction adenosine(1618) in 23S rRNA + S-adenosyl-L-methionine = N(6)-methyladenosine(1618) in 23S rRNA + S-adenosyl-L-homocysteine + H(+). In terms of biological role, specifically methylates the adenine in position 1618 of 23S rRNA. The sequence is that of Ribosomal RNA large subunit methyltransferase F from Cronobacter sakazakii (strain ATCC BAA-894) (Enterobacter sakazakii).